The chain runs to 464 residues: Argininosuccinate lyase (464 aa).

It belongs to the lyase 1 family. Argininosuccinate lyase subfamily.

It localises to the cytoplasm. The enzyme catalyses 2-(N(omega)-L-arginino)succinate = fumarate + L-arginine. The protein operates within amino-acid biosynthesis; L-arginine biosynthesis; L-arginine from L-ornithine and carbamoyl phosphate: step 3/3. The polypeptide is Argininosuccinate lyase (Koribacter versatilis (strain Ellin345)).